The chain runs to 316 residues: BTB/POZ domain-containing adapter for CUL3-mediated RhoA degradation protein 2 (316 aa).

A BTB domain is found at K28–Q96. Residues E268–P279 show a composition bias toward polar residues. The interval E268–E287 is disordered. S278 is modified (phosphoserine). Position 280 is a phosphoserine; by CK2 (S280).

This sequence belongs to the BACURD family. In terms of assembly, component of the BCR(TNFAIP1) E3 ubiquitin ligase complex, at least composed of CUL3, TNFAIP1/BACURD2 and RBX1. Interacts with RHOA; with a preference for RhoA-GDP. Interacts with RHOB. Interacts with CSNK2B. Interacts with PCNA. Phosphorylation at Ser-280 by CK2 facilitates the nucleus localization and increases interaction with PCNA.

Its subcellular location is the cytoplasm. It is found in the nucleus. It localises to the endosome. It participates in protein modification; protein ubiquitination. Functionally, substrate-specific adapter of a BCR (BTB-CUL3-RBX1) E3 ubiquitin-protein ligase complex involved in regulation of cytoskeleton structure. The BCR(TNFAIP1) E3 ubiquitin ligase complex mediates the ubiquitination of RHOA, leading to its degradation by the proteasome, thereby regulating the actin cytoskeleton and cell migration. Its interaction with RHOB may regulate apoptosis. May enhance the PCNA-dependent DNA polymerase delta activity. The polypeptide is BTB/POZ domain-containing adapter for CUL3-mediated RhoA degradation protein 2 (Tnfaip1) (Rattus norvegicus (Rat)).